The following is a 265-amino-acid chain: Apolipoprotein A-I (265 aa).

A signal peptide spans 1 to 18 (MKALVLTLAVLFFTGSQA). 2 tandem repeats follow at residues 67–88 (LKLLDNWDSLTSTFAKVREQLG) and 89–110 (PVTQEFWDNLEKETESLRQEMN). The segment at 67–265 (LKLLDNWDSL…DEASKKLNAQ (199 aa)) is 10 X approximate tandem repeats. Residue Met-109 is modified to Methionine sulfoxide. The stretch at 111–121 (KDLEEVKQKVQ) is one 3; half-length repeat. 5 tandem repeats follow at residues 122–142 (PYLDEFKRKWQEELQIYRQKV), 144–165 (PLGEELREGARQKVQELQDKLT), 166–187 (PLAEEMRDRARAHVETLRQQLA), 188–209 (PYSDDLRQRMATRFEVLKEGGG), and 210–230 (SLAEYHAKASEQLKALGEKAK). The 9; half-length repeat unit spans residues 231 to 241 (PALEDLRQGLL). Residues 242-265 (PVLESLKVSILAAIDEASKKLNAQ) form repeat 10.

This sequence belongs to the apolipoprotein A1/A4/E family. Homodimer. Interacts with APOA1BP and CLU. Component of a sperm activating protein complex (SPAP), consisting of APOA1, an immunoglobulin heavy chain, an immunoglobulin light chain and albumin. Interacts with NDRG1. Interacts with SCGB3A2. Interacts with NAXE and YJEFN3. Glycosylated. Post-translationally, palmitoylated. In terms of processing, phosphorylation sites are present in the extracellular medium. In terms of tissue distribution, major protein of plasma HDL, also found in chylomicrons.

Its subcellular location is the secreted. In terms of biological role, participates in the reverse transport of cholesterol from tissues to the liver for excretion by promoting cholesterol efflux from tissues and by acting as a cofactor for the lecithin cholesterol acyltransferase (LCAT). As part of the SPAP complex, activates spermatozoa motility. In Physeter macrocephalus (Sperm whale), this protein is Apolipoprotein A-I (APOA1).